The sequence spans 122 residues: Small ribosomal subunit protein uS13 (122 aa).

The tract at residues 95–122 (GLPVRGQRTHTNARTRKGPAKPIAGKKK) is disordered.

This sequence belongs to the universal ribosomal protein uS13 family. In terms of assembly, part of the 30S ribosomal subunit. Forms a loose heterodimer with protein S19. Forms two bridges to the 50S subunit in the 70S ribosome.

Its function is as follows. Located at the top of the head of the 30S subunit, it contacts several helices of the 16S rRNA. In the 70S ribosome it contacts the 23S rRNA (bridge B1a) and protein L5 of the 50S subunit (bridge B1b), connecting the 2 subunits; these bridges are implicated in subunit movement. Contacts the tRNAs in the A and P-sites. The sequence is that of Small ribosomal subunit protein uS13 from Rhodospirillum rubrum (strain ATCC 11170 / ATH 1.1.1 / DSM 467 / LMG 4362 / NCIMB 8255 / S1).